The chain runs to 143 residues: MAVERTLSIIKPDAVAKNVIGEIYTRFEKAGLKIVAARMMHLSREQAEGFYAVHKERPFFKDLVDFMISGPVIVQALEGENAVALHRDIMGATNPKDAAPGTIRADFAESIDENAVHGSDSLENAGKEIAFFFKPEEICARTR.

Positions 11, 59, 87, 93, 104, and 114 each coordinate ATP. Catalysis depends on His-117, which acts as the Pros-phosphohistidine intermediate.

This sequence belongs to the NDK family. Homotetramer. The cofactor is Mg(2+).

It localises to the cytoplasm. It catalyses the reaction a 2'-deoxyribonucleoside 5'-diphosphate + ATP = a 2'-deoxyribonucleoside 5'-triphosphate + ADP. The enzyme catalyses a ribonucleoside 5'-diphosphate + ATP = a ribonucleoside 5'-triphosphate + ADP. Major role in the synthesis of nucleoside triphosphates other than ATP. The ATP gamma phosphate is transferred to the NDP beta phosphate via a ping-pong mechanism, using a phosphorylated active-site intermediate. This Thioalkalivibrio sulfidiphilus (strain HL-EbGR7) protein is Nucleoside diphosphate kinase.